Consider the following 516-residue polypeptide: Cytochrome P450 1A1 (516 aa).

Residues 33 to 44 (WQPRVPKGLKSP) are mitochondrial targeting signal. A glycan (O-linked (GlcNAc) serine) is linked at Ser71. A substrate-binding site is contributed by Phe228. A heme-binding site is contributed by Cys461.

This sequence belongs to the cytochrome P450 family. Interacts with cytosolic chaperones HSP70 and HSP90; this interaction is required for initial targeting to mitochondria. Interacts (via mitochondrial targeting signal) with TOMM40 (via N-terminus); this interaction is required for translocation across the mitochondrial outer membrane. Heme is required as a cofactor.

It is found in the endoplasmic reticulum membrane. Its subcellular location is the mitochondrion inner membrane. The protein localises to the microsome membrane. The protein resides in the cytoplasm. It catalyses the reaction an organic molecule + reduced [NADPH--hemoprotein reductase] + O2 = an alcohol + oxidized [NADPH--hemoprotein reductase] + H2O + H(+). It carries out the reaction estrone + reduced [NADPH--hemoprotein reductase] + O2 = 2-hydroxyestrone + oxidized [NADPH--hemoprotein reductase] + H2O + H(+). The enzyme catalyses estrone + reduced [NADPH--hemoprotein reductase] + O2 = 4-hydroxyestrone + oxidized [NADPH--hemoprotein reductase] + H2O + H(+). The catalysed reaction is estrone + reduced [NADPH--hemoprotein reductase] + O2 = 6alpha-hydroxyestrone + oxidized [NADPH--hemoprotein reductase] + H2O + H(+). It catalyses the reaction estrone + reduced [NADPH--hemoprotein reductase] + O2 = 15alpha-hydroxyestrone + oxidized [NADPH--hemoprotein reductase] + H2O + H(+). It carries out the reaction estrone + reduced [NADPH--hemoprotein reductase] + O2 = 16alpha-hydroxyestrone + oxidized [NADPH--hemoprotein reductase] + H2O + H(+). The enzyme catalyses 17beta-estradiol + reduced [NADPH--hemoprotein reductase] + O2 = 2-hydroxy-17beta-estradiol + oxidized [NADPH--hemoprotein reductase] + H2O + H(+). The catalysed reaction is 17beta-estradiol + reduced [NADPH--hemoprotein reductase] + O2 = 4-hydroxy-17beta-estradiol + oxidized [NADPH--hemoprotein reductase] + H2O + H(+). It catalyses the reaction 17beta-estradiol + reduced [NADPH--hemoprotein reductase] + O2 = 6alpha-hydroxy-17beta-estradiol + oxidized [NADPH--hemoprotein reductase] + H2O + H(+). It carries out the reaction 17beta-estradiol + reduced [NADPH--hemoprotein reductase] + O2 = 7alpha-hydroxy-17beta-estradiol + oxidized [NADPH--hemoprotein reductase] + H2O + H(+). The enzyme catalyses 17beta-estradiol + reduced [NADPH--hemoprotein reductase] + O2 = 15alpha-hydroxy-17beta-estradiol + oxidized [NADPH--hemoprotein reductase] + H2O + H(+). The catalysed reaction is (5Z,8Z,11Z)-eicosatrienoate + reduced [NADPH--hemoprotein reductase] + O2 = 19-hydroxy-(5Z,8Z,11Z)-eicosatrienoate + oxidized [NADPH--hemoprotein reductase] + H2O + H(+). It catalyses the reaction (5Z,8Z,11Z,14Z)-eicosatetraenoate + reduced [NADPH--hemoprotein reductase] + O2 = 16-hydroxy-(5Z,8Z,11Z,14Z)-eicosatetraenoate + oxidized [NADPH--hemoprotein reductase] + H2O + H(+). It carries out the reaction (5Z,8Z,11Z,14Z)-eicosatetraenoate + reduced [NADPH--hemoprotein reductase] + O2 = 17-hydroxy-(5Z,8Z,11Z,14Z)-eicosatetraenoate + oxidized [NADPH--hemoprotein reductase] + H2O + H(+). The enzyme catalyses (5Z,8Z,11Z,14Z)-eicosatetraenoate + reduced [NADPH--hemoprotein reductase] + O2 = 18-hydroxy-(5Z,8Z,11Z,14Z)-eicosatetraenoate + oxidized [NADPH--hemoprotein reductase] + H2O + H(+). The catalysed reaction is (5Z,8Z,11Z,14Z)-eicosatetraenoate + reduced [NADPH--hemoprotein reductase] + O2 = 19-hydroxy-(5Z,8Z,11Z,14Z)-eicosatetraenoate + oxidized [NADPH--hemoprotein reductase] + H2O + H(+). It catalyses the reaction (5Z,8Z,11Z,14Z,17Z)-eicosapentaenoate + reduced [NADPH--hemoprotein reductase] + O2 = 19-hydroxy-(5Z,8Z,11Z,14Z,17Z)-eicosapentaenoate + oxidized [NADPH--hemoprotein reductase] + H2O + H(+). It carries out the reaction (5Z,8Z,11Z,14Z)-eicosatetraenoate + reduced [NADPH--hemoprotein reductase] + O2 = (8R,9S)-epoxy-(5Z,11Z,14Z)-eicosatrienoate + oxidized [NADPH--hemoprotein reductase] + H2O + H(+). The enzyme catalyses (5Z,8Z,11Z,14Z)-eicosatetraenoate + reduced [NADPH--hemoprotein reductase] + O2 = (11R,12S)-epoxy-(5Z,8Z,14Z)-eicosatrienoate + oxidized [NADPH--hemoprotein reductase] + H2O + H(+). The catalysed reaction is (5Z,8Z,11Z,14Z)-eicosatetraenoate + reduced [NADPH--hemoprotein reductase] + O2 = (14S,15R)-epoxy-(5Z,8Z,11Z)-eicosatrienoate + oxidized [NADPH--hemoprotein reductase] + H2O + H(+). It catalyses the reaction (5Z,8Z,11Z,14Z)-eicosatetraenoate + reduced [NADPH--hemoprotein reductase] + O2 = (14R,15S)-epoxy-(5Z,8Z,11Z)-eicosatrienoate + oxidized [NADPH--hemoprotein reductase] + H2O + H(+). It carries out the reaction (5Z,8Z,11Z,14Z,17Z)-eicosapentaenoate + reduced [NADPH--hemoprotein reductase] + O2 = (17R,18S)-epoxy-(5Z,8Z,11Z,14Z)-eicosatetraenoate + oxidized [NADPH--hemoprotein reductase] + H2O + H(+). The enzyme catalyses (4Z,7Z,10Z,13Z,16Z,19Z)-docosahexaenoate + reduced [NADPH--hemoprotein reductase] + O2 = (19S,20R)-epoxy-(4Z,7Z,10Z,13Z,16Z)-docosapentaenoate + oxidized [NADPH--hemoprotein reductase] + H2O + H(+). The catalysed reaction is (4Z,7Z,10Z,13Z,16Z,19Z)-docosahexaenoate + reduced [NADPH--hemoprotein reductase] + O2 = (19R,20S)-epoxy-(4Z,7Z,10Z,13Z,16Z)-docosapentaenoate + oxidized [NADPH--hemoprotein reductase] + H2O + H(+). It catalyses the reaction all-trans-retinol + reduced [NADPH--hemoprotein reductase] + O2 = all-trans-retinal + oxidized [NADPH--hemoprotein reductase] + 2 H2O + H(+). It carries out the reaction all-trans-retinal + reduced [NADPH--hemoprotein reductase] + O2 = all-trans-retinoate + oxidized [NADPH--hemoprotein reductase] + H2O + 2 H(+). The enzyme catalyses (13S)-hydroperoxy-(9Z,11E)-octadecadienoate = 13-oxo-(9Z,11E)-octadecadienoate + H2O. The catalysed reaction is (12S)-hydroperoxy-(5Z,8Z,10E,14Z)-eicosatetraenoate = 12-oxo-(5Z,8Z,10E,14Z)-eicosatetraenoate + H2O. It catalyses the reaction (15S)-hydroperoxy-(5Z,8Z,11Z,13E)-eicosatetraenoate = 15-oxo-(5Z,8Z,11Z,13E)-eicosatetraenoate + H2O. It carries out the reaction (5S)-hydroperoxy-(6E,8Z,11Z,14Z)-eicosatetraenoate = 5-oxo-(6E,8Z,11Z,14Z)-eicosatetraenoate + H2O. Its pathway is steroid hormone biosynthesis. The protein operates within lipid metabolism; fatty acid metabolism. It functions in the pathway cofactor metabolism; retinol metabolism. Its function is as follows. A cytochrome P450 monooxygenase involved in the metabolism of various endogenous substrates, including fatty acids, steroid hormones and vitamins. Mechanistically, uses molecular oxygen inserting one oxygen atom into a substrate, and reducing the second into a water molecule, with two electrons provided by NADPH via cytochrome P450 reductase (CPR; NADPH-ferrihemoprotein reductase). Catalyzes the hydroxylation of carbon-hydrogen bonds. Exhibits high catalytic activity for the formation of hydroxyestrogens from estrone (E1) and 17beta-estradiol (E2), namely 2-hydroxy E1 and E2, as well as D-ring hydroxylated E1 and E2 at the C15alpha and C16alpha positions. Displays different regioselectivities for polyunsaturated fatty acids (PUFA) hydroxylation. Catalyzes the epoxidation of double bonds of certain PUFA. Converts arachidonic acid toward epoxyeicosatrienoic acid (EET) regioisomers, 8,9-, 11,12-, and 14,15-EET, that function as lipid mediators in the vascular system. Displays an absolute stereoselectivity in the epoxidation of eicosapentaenoic acid (EPA) producing the 17(R),18(S) enantiomer. May play an important role in all-trans retinoic acid biosynthesis in extrahepatic tissues. Catalyzes two successive oxidative transformation of all-trans retinol to all-trans retinal and then to the active form all-trans retinoic acid. May also participate in eicosanoids metabolism by converting hydroperoxide species into oxo metabolites (lipoxygenase-like reaction, NADPH-independent). This Balaenoptera acutorostrata (Common minke whale) protein is Cytochrome P450 1A1 (CYP1A1).